Reading from the N-terminus, the 75-residue chain is Cruzioseptin-6 (75 aa).

Residues 1-22 (MAYLKKSLFLVLFLGLVSLSIC) form the signal peptide. Residues 23–43 (EEEKREEENEEEQEDDDQSEE) constitute a propeptide that is removed on maturation. The segment at 24–44 (EEKREEENEEEQEDDDQSEEK) is disordered. Over residues 30-41 (ENEEEQEDDDQS) the composition is skewed to acidic residues.

Expressed by the skin glands.

It is found in the secreted. Functionally, has antimicrobial activity. This Cruziohyla calcarifer (Splendid leaf frog) protein is Cruzioseptin-6.